A 153-amino-acid polypeptide reads, in one-letter code: Insulin-like growth factor 1 (153 aa).

A b region spans residues 49–77 (GPETLCGAELVDALQFVCGDRGFYFNKPT). 3 disulfides stabilise this stretch: Cys-54–Cys-96, Cys-66–Cys-109, and Cys-95–Cys-100. The interval 78–89 (GYGSSSRRAPQT) is c. An a region spans residues 90–110 (GIVDECCFRSCDLRRLEMYCA). A d region spans residues 111–118 (PLKPAKSA). Positions 119-153 (RSVRAQRHTDMPKAQKEVHLKNTSRGSSGNKNYRM) are cleaved as a propeptide — e peptide. The disordered stretch occupies residues 120 to 153 (SVRAQRHTDMPKAQKEVHLKNTSRGSSGNKNYRM). Residues 125–138 (RHTDMPKAQKEVHL) are compositionally biased toward basic and acidic residues. Over residues 139 to 153 (KNTSRGSSGNKNYRM) the composition is skewed to polar residues.

It belongs to the insulin family. As to quaternary structure, forms a ternary complex with IGFR1 and ITGAV:ITGB3. Forms a ternary complex with IGFR1 and ITGA6:ITGB4. Forms a ternary complex with IGFBP3 and ALS.

Its subcellular location is the secreted. In terms of biological role, the insulin-like growth factors, isolated from plasma, are structurally and functionally related to insulin but have a much higher growth-promoting activity. May be a physiological regulator of [1-14C]-2-deoxy-D-glucose (2DG) transport and glycogen synthesis in osteoblasts. Stimulates glucose transport in bone-derived osteoblastic (PyMS) cells and is effective at much lower concentrations than insulin, not only regarding glycogen and DNA synthesis but also with regard to enhancing glucose uptake. May play a role in synapse maturation. Ca(2+)-dependent exocytosis of IGF1 is required for sensory perception of smell in the olfactory bulb. Acts as a ligand for IGF1R. Binds to the alpha subunit of IGF1R, leading to the activation of the intrinsic tyrosine kinase activity which autophosphorylates tyrosine residues in the beta subunit thus initiating a cascade of down-stream signaling events leading to activation of the PI3K-AKT/PKB and the Ras-MAPK pathways. Binds to integrins ITGAV:ITGB3 and ITGA6:ITGB4. Its binding to integrins and subsequent ternary complex formation with integrins and IGFR1 are essential for IGF1 signaling. Induces the phosphorylation and activation of IGFR1, MAPK3/ERK1, MAPK1/ERK2 and AKT1. As part of the MAPK/ERK signaling pathway, acts as a negative regulator of apoptosis in cardiomyocytes via promotion of STUB1/CHIP-mediated ubiquitination and degradation of ICER-type isoforms of CREM. This Sus scrofa (Pig) protein is Insulin-like growth factor 1.